We begin with the raw amino-acid sequence, 141 residues long: ATP synthase epsilon chain (141 aa).

It belongs to the ATPase epsilon chain family. F-type ATPases have 2 components, CF(1) - the catalytic core - and CF(0) - the membrane proton channel. CF(1) has five subunits: alpha(3), beta(3), gamma(1), delta(1), epsilon(1). CF(0) has three main subunits: a, b and c.

Its subcellular location is the cell inner membrane. Produces ATP from ADP in the presence of a proton gradient across the membrane. The chain is ATP synthase epsilon chain from Desulfatibacillum aliphaticivorans.